The chain runs to 385 residues: 8-amino-7-oxononanoate synthase (385 aa).

Arg21 contributes to the substrate binding site. 108 to 109 contributes to the pyridoxal 5'-phosphate binding site; sequence GY. His133 contacts substrate. Pyridoxal 5'-phosphate-binding residues include Ser179, His207, and Thr233. The residue at position 236 (Lys236) is an N6-(pyridoxal phosphate)lysine. A substrate-binding site is contributed by Thr350.

It belongs to the class-II pyridoxal-phosphate-dependent aminotransferase family. BioF subfamily. As to quaternary structure, homodimer. The cofactor is pyridoxal 5'-phosphate.

The enzyme catalyses 6-carboxyhexanoyl-[ACP] + L-alanine + H(+) = (8S)-8-amino-7-oxononanoate + holo-[ACP] + CO2. Its pathway is cofactor biosynthesis; biotin biosynthesis. Functionally, catalyzes the decarboxylative condensation of pimeloyl-[acyl-carrier protein] and L-alanine to produce 8-amino-7-oxononanoate (AON), [acyl-carrier protein], and carbon dioxide. This is 8-amino-7-oxononanoate synthase from Pectobacterium atrosepticum (strain SCRI 1043 / ATCC BAA-672) (Erwinia carotovora subsp. atroseptica).